The following is a 463-amino-acid chain: FAD-dependent monooxygenase ausM (463 aa).

Positions 40, 54, and 113 each coordinate FAD. Tyr-217 is a catalytic residue. Residues Asp-309 and Ala-322 each coordinate FAD. Residues 443-463 traverse the membrane as a helical segment; the sequence is VPWLVISLPVLASVLCYLMFA.

The protein belongs to the paxM FAD-dependent monooxygenase family. FAD serves as cofactor.

The protein resides in the membrane. The protein operates within secondary metabolite biosynthesis; terpenoid biosynthesis. In terms of biological role, FAD-dependent monooxygenase; part of the gene cluster that mediates the biosynthesis of calidodehydroaustin, a fungal meroterpenoid. The first step of the pathway is the synthesis of 3,5-dimethylorsellinic acid by the polyketide synthase ausA. 3,5-dimethylorsellinic acid is then prenylated by the polyprenyl transferase ausN. Further epoxidation by the FAD-dependent monooxygenase ausM and cyclization by the probable terpene cyclase ausL lead to the formation of protoaustinoid A. Protoaustinoid A is then oxidized to spiro-lactone preaustinoid A3 by the combined action of the FAD-binding monooxygenases ausB and ausC, and the dioxygenase ausE. Acid-catalyzed keto-rearrangement and ring contraction of the tetraketide portion of preaustinoid A3 by ausJ lead to the formation of preaustinoid A4. The aldo-keto reductase ausK, with the help of ausH, is involved in the next step by transforming preaustinoid A4 into isoaustinone which is in turn hydroxylated by the P450 monooxygenase ausI to form austinolide. The cytochrome P450 monooxygenase ausG modifies austinolide to austinol. Austinol is further acetylated to austin by the O-acetyltransferase ausP, which spontaneously changes to dehydroaustin. The cytochrome P450 monooxygenase ausR then converts dehydroaustin is into 7-dehydrodehydroaustin. The hydroxylation catalyzed by ausR permits the O-acetyltransferase ausQ to add an additional acetyl group to the molecule, leading to the formation of acetoxydehydroaustin. The short chain dehydrogenase ausT catalyzes the reduction of the double bond present between carbon atoms 1 and 2 to convert 7-dehydrodehydroaustin into 1,2-dihydro-7-hydroxydehydroaustin. AusQ catalyzes not only an acetylation reaction but also the addition of the PKS ausV diketide product to 1,2-dihydro-7-hydroxydehydroaustin, forming precalidodehydroaustin. Finally, the iron/alpha-ketoglutarate-dependent dioxygenase converts precalidodehydroaustin into calidodehydroaustin. The polypeptide is FAD-dependent monooxygenase ausM (Aspergillus calidoustus).